A 1242-amino-acid polypeptide reads, in one-letter code: DNA polymerase catalytic subunit (1242 aa).

Disordered regions lie at residues 14–38, 644–665, and 1109–1162; these read GAVAGGRRQRSQPGSAQGSGKRPPQ, LQSAPSSQDGVSPGSGSNSSSS, and APQG…RKPP. A compositionally biased stretch (low complexity) spans 653-665; sequence GVSPGSGSNSSSS. Polar residues predominate over residues 1111–1125; the sequence is QGSSDNGDSVTTGVV. Residues 1145-1155 show a composition bias toward basic and acidic residues; it reads ESNRRGGEPAK.

This sequence belongs to the DNA polymerase type-B family. In terms of assembly, forms a complex with the ssDNA-binding protein UL57, the DNA polymerase processivity factor UL44, and the alkaline exonuclease UL98. Interacts with the putative helicase-primase complex composed of UL70, UL102 and UL105 proteins; these interactions may coordinate leading and lagging strand DNA synthesis at the replication fork.

It localises to the host nucleus. It catalyses the reaction DNA(n) + a 2'-deoxyribonucleoside 5'-triphosphate = DNA(n+1) + diphosphate. Replicates viral genomic DNA in the late phase of lytic infection, producing long concatemeric DNA. The replication complex is composed of six viral proteins: the DNA polymerase, processivity factor, primase, primase-associated factor, helicase, and ssDNA-binding protein. This is DNA polymerase catalytic subunit (UL54) from Homo sapiens (Human).